We begin with the raw amino-acid sequence, 610 residues long: Chitinase 63 (610 aa).

Residues 1-30 (MRFRHKAAALAATLALPLAGLVGLASPAQA) form the signal peptide. The CBM2 domain maps to 31-134 (ATSATATFQK…KINGGSCDGS (104 aa)). Disordered regions lie at residues 125-153 (KINGGSCDGSSVPGDEAPSAPGTPTASNI) and 208-239 (ARDTGDQTGPASGSVKVTTTGGDGGEPNPNPG). One can recognise a Fibronectin type-III domain in the interval 144 to 229 (APGTPTASNI…GSVKVTTTGG (86 aa)). Residues 213 to 224 (DQTGPASGSVKV) show a composition bias toward polar residues. The 370-residue stretch at 241–610 (EVKMGYFTNW…LVSAIDSGLK (370 aa)) folds into the GH18 domain. Residues 313–314 (DQ) and 340–343 (GGWT) contribute to the chitin site. E383 (proton donor) is an active-site residue. Residues Y384, 450–453 (MTYD), and W590 each bind chitin.

It belongs to the glycosyl hydrolase 18 family. Chitinase class II subfamily.

It carries out the reaction Random endo-hydrolysis of N-acetyl-beta-D-glucosaminide (1-&gt;4)-beta-linkages in chitin and chitodextrins.. This Streptomyces plicatus protein is Chitinase 63 (chtA).